The chain runs to 64 residues: Translation machinery-associated protein 7 (64 aa).

Disordered stretches follow at residues 1–38 (MSSR…ADAA) and 45–64 (ANMK…SGKK). The span at 27-38 (IAFKEKQKADAA) shows a compositional bias: basic and acidic residues. Positions 53-64 (LVGGGIKKSGKK) are enriched in gly residues.

The protein belongs to the TMA7 family. As to quaternary structure, interacts with the 40S ribosomal subunit.

It is found in the cytoplasm. The protein resides in the nucleus. Functionally, involved in protein synthesis. The sequence is that of Translation machinery-associated protein 7 (TMA7) from Saccharomyces cerevisiae (strain ATCC 204508 / S288c) (Baker's yeast).